Consider the following 356-residue polypeptide: MSRLLHAEEWAEVKELGDHHRQPQPHHLPQPPPPPPPQPPATLQAREHPVYPPELSLLDSTDPRAWLAPTLQGICTARAAQYLLHSPELSASEAAAPRDEVDGRGELVRRSSGGASSSKSPGPVKVREQLCKLKGGVVVDELGCSRQRAPSSKQVNGVQKQRRLAANARERRRMHGLNHAFDQLRNVIPSFNNDKKLSKYETLQMAQIYINALSELLQTPSGGEQPPPPPASCKSDHHHLRTAASYEGGAGNATAAGAQQASGGSQRPTPPGSCRTRFSAPASAGGYSVQLDALHFSTFEDSALTAMMAQKNLSPSLPGSILQPVQEENSKTSPRSHRSDGEFSPHSHYSDSDEAS.

A compositionally biased stretch (basic and acidic residues) spans 1-21; it reads MSRLLHAEEWAEVKELGDHHR. Disordered regions lie at residues 1–56 and 92–125; these read MSRL…PELS and SEAAAPRDEVDGRGELVRRSSGGASSSKSPGPVK. Pro residues predominate over residues 26–40; that stretch reads HHLPQPPPPPPPQPP. The span at 96 to 109 shows a compositional bias: basic and acidic residues; it reads APRDEVDGRGELVR. Positions 110–124 are enriched in low complexity; sequence RSSGGASSSKSPGPV. Residues 161–213 enclose the bHLH domain; sequence QRRLAANARERRRMHGLNHAFDQLRNVIPSFNNDKKLSKYETLQMAQIYINAL. Disordered stretches follow at residues 218 to 279 and 314 to 356; these read QTPS…TRFS and SPSL…DEAS. Over residues 252–266 the composition is skewed to low complexity; sequence NATAAGAQQASGGSQ. A compositionally biased stretch (basic and acidic residues) spans 337–356; it reads HRSDGEFSPHSHYSDSDEAS.

In terms of assembly, efficient DNA binding requires dimerization with another bHLH protein.

The protein resides in the nucleus. In terms of biological role, transcriptional regulator. Activates E box-dependent transcription in collaboration with TCF3/E47, but the activity is completely antagonized by the negative regulator of neurogenesis HES1. Plays a role in the differentiation of subsets of neural cells by activating E box-dependent transcription. In Pan troglodytes (Chimpanzee), this protein is Transcription factor ATOH1.